We begin with the raw amino-acid sequence, 556 residues long: Formate--tetrahydrofolate ligase (556 aa).

Thr65–Ser72 contacts ATP.

This sequence belongs to the formate--tetrahydrofolate ligase family.

It carries out the reaction (6S)-5,6,7,8-tetrahydrofolate + formate + ATP = (6R)-10-formyltetrahydrofolate + ADP + phosphate. The protein operates within one-carbon metabolism; tetrahydrofolate interconversion. This Clostridium beijerinckii (strain ATCC 51743 / NCIMB 8052) (Clostridium acetobutylicum) protein is Formate--tetrahydrofolate ligase.